The sequence spans 875 residues: MMSIQSIITKETLKKKDTNIEIQEKNMNDLVESASRVIAPLWPIATFAAHHPWMGLEKQSFEQVADWLKEARNVDIYPSASMIHSAKAKGEIEESFLQSGLSRWLDSQSFHIPRKKVEQFCQAALKLEELPSSLLSSPQLNKLAEEMSYINTESMKDSFLQPVSSFIENQKGENLSDILNYHIIKWCKLYLDDSGSSWTMPNREQGLYRAWHHLIKFDPALSKNERSVLKDWPEDAEIALTRALSELGISESNKQAYLEGHLLALPGWAGMILWRSQQSTQEQELLIQYLAVRISMELAIVKPYLPIKNQKAEKKIAIVPLIASWIYWGNISTLKWSQMSAAEQSELLAFAYRFDENIRRKLWLEAWEQTHAEQLKKKISSKQRATNDKKRALAQLAFCIDVRSEPFRRHLEKLGPFETFGIAGFFGLPIATSELGSSDSHPSLPVILKPKHQIKELTDENEFKNYQQRKKIDSSVSYTFKTMKQNVLTSMLLPEVSGPLLGLQMVTRSFVPRRVGSFLRNLRKTMLQKPDTTFSLNHVHDTKCEIPIGFTKEEKVNYVRQALKMVGLTEKFAPLVVMCGHSSQSTNNPYAAALECGACGGAAGGFNAKVFATLCNLPEVREALSAEGIKIPEDTIFAAAEHKTTVDELEWIYIPELSETAQEAFDSIESVMPNVSQHANRERLMQLPNFKTEIKNPSKEAHRFAEDWSEIRPEWGLARNASFIIGQRELTQDCDLEGRAFLHNYDWKQDGSGDILASIIAGPGTVAQWINLQYYASTVAPHYYGSGNKTTQTVTAGLGVMQGNASDLLPGLPWQSVMQSDRETYHSPLRLLIVIQAPTKYIEHLLNNDFTFREKVQNGWVRLASVDPEGRWKNW.

Cys399, Asp401, His581, and Cys596 together coordinate Zn(2+).

Belongs to the inorganic carbon transporter (TC 9.A.2) DabA family. Forms a complex with DabB. The cofactor is Zn(2+).

Its subcellular location is the cell membrane. Functionally, part of an energy-coupled inorganic carbon pump. This is Probable inorganic carbon transporter subunit DabA from Bacillus thuringiensis (strain Al Hakam).